Here is a 599-residue protein sequence, read N- to C-terminus: Elongation factor 4 (599 aa).

Residues 5–187 (SHIRNFSIIA…RLVTAIPAPE (183 aa)) enclose the tr-type G domain. GTP-binding positions include 17–22 (DHGKST) and 134–137 (NKMD).

Belongs to the TRAFAC class translation factor GTPase superfamily. Classic translation factor GTPase family. LepA subfamily.

Its subcellular location is the cell inner membrane. It catalyses the reaction GTP + H2O = GDP + phosphate + H(+). In terms of biological role, required for accurate and efficient protein synthesis under certain stress conditions. May act as a fidelity factor of the translation reaction, by catalyzing a one-codon backward translocation of tRNAs on improperly translocated ribosomes. Back-translocation proceeds from a post-translocation (POST) complex to a pre-translocation (PRE) complex, thus giving elongation factor G a second chance to translocate the tRNAs correctly. Binds to ribosomes in a GTP-dependent manner. The polypeptide is Elongation factor 4 (Pseudomonas aeruginosa (strain LESB58)).